Consider the following 1463-residue polypeptide: Clustered mitochondria protein homolog (1463 aa).

Residues 1–79 (MAKNKKQNGK…ETEQQQQQQE (79 aa)) are disordered. Residues 10-22 (KAKTPPVVAAAAG) are compositionally biased toward low complexity. Positions 374–616 (RAEDTFSSKL…RTFPPDVNFL (243 aa)) constitute a Clu domain. Disordered stretches follow at residues 684–753 (AQKT…SEDA), 942–988 (GDGQ…SVPS), and 1387–1463 (QKEA…RRKS). Positions 692 to 702 (KQAAIEAAAPA) are enriched in low complexity. Basic and acidic residues predominate over residues 703 to 731 (EGDKTPAKDAKDGKEAGKDANDGKEEGST). A compositionally biased stretch (basic residues) spans 955–964 (GGKKQNKQSK). Positions 965 to 980 (RGGGGGGGKGAAGGGR) are enriched in gly residues. Over residues 1438-1456 (AEAASHTAGGAAANTAAPA) the composition is skewed to low complexity.

Belongs to the CLU family.

It is found in the cytoplasm. Functionally, mRNA-binding protein involved in proper cytoplasmic distribution of mitochondria. This is Clustered mitochondria protein homolog from Anopheles gambiae (African malaria mosquito).